Here is a 58-residue protein sequence, read N- to C-terminus: Large ribosomal subunit protein uL30 (58 aa).

This sequence belongs to the universal ribosomal protein uL30 family. As to quaternary structure, part of the 50S ribosomal subunit.

The polypeptide is Large ribosomal subunit protein uL30 (Vibrio vulnificus (strain CMCP6)).